The primary structure comprises 238 residues: Sugar fermentation stimulation protein homolog (238 aa).

The protein belongs to the SfsA family.

This is Sugar fermentation stimulation protein homolog from Klebsiella pneumoniae (strain 342).